Here is a 134-residue protein sequence, read N- to C-terminus: Large ribosomal subunit protein bL20 (134 aa).

The protein belongs to the bacterial ribosomal protein bL20 family.

In terms of biological role, binds directly to 23S ribosomal RNA and is necessary for the in vitro assembly process of the 50S ribosomal subunit. It is not involved in the protein synthesizing functions of that subunit. This is Large ribosomal subunit protein bL20 from Rhizobium leguminosarum bv. trifolii (strain WSM2304).